We begin with the raw amino-acid sequence, 77 residues long: MARVCQVTGKAPMVGNNVSHANNKTKRRFLPNLQNRRFWVESENRWVSLRVSNAGLRLIDKKGIDEVLADLRARGEV.

Belongs to the bacterial ribosomal protein bL28 family.

This chain is Large ribosomal subunit protein bL28, found in Ralstonia nicotianae (strain ATCC BAA-1114 / GMI1000) (Ralstonia solanacearum).